We begin with the raw amino-acid sequence, 310 residues long: Upstream stimulatory factor 1 (310 aa).

Polar residues predominate over residues 1–17 (MKGQQKTAETEEGTVQI). 2 disordered regions span residues 1–26 (MKGQ…ATGE) and 171–209 (QGGS…EVER). Over residues 190–209 (EAPRTTRDEKRRAQHNEVER) the composition is skewed to basic and acidic residues. Positions 199–254 (KRRAQHNEVERRRRDKINNWIVQLSKIIPDCSMESTKSGQSKGGILSKACDYIQEL) constitute a bHLH domain. The segment at 271–292 (LQLDNDVLRQQVEDLKNKNLLL) is leucine-zipper. Lysine 306 participates in a covalent cross-link: Glycyl lysine isopeptide (Lys-Gly) (interchain with G-Cter in SUMO2).

As to quaternary structure, efficient DNA binding requires dimerization with another bHLH protein. Binds DNA as a homodimer or a heterodimer (USF1/USF2).

It is found in the nucleus. Transcription factor that binds to a symmetrical DNA sequence (E-boxes) (5'-CACGTG-3') that is found in a variety of viral and cellular promoters. This Mus musculus (Mouse) protein is Upstream stimulatory factor 1 (Usf1).